The primary structure comprises 228 residues: ATP-dependent dethiobiotin synthetase BioD (228 aa).

Residue 12–17 (EIGKTT) participates in ATP binding. Threonine 16 contributes to the Mg(2+) binding site. Lysine 37 is an active-site residue. Residue serine 41 coordinates substrate. ATP-binding positions include aspartate 54, 116-119 (EGAG), and 205-207 (PRL). Residues aspartate 54 and glutamate 116 each contribute to the Mg(2+) site.

It belongs to the dethiobiotin synthetase family. As to quaternary structure, homodimer. It depends on Mg(2+) as a cofactor.

It is found in the cytoplasm. It carries out the reaction (7R,8S)-7,8-diammoniononanoate + CO2 + ATP = (4R,5S)-dethiobiotin + ADP + phosphate + 3 H(+). It participates in cofactor biosynthesis; biotin biosynthesis; biotin from 7,8-diaminononanoate: step 1/2. Its function is as follows. Catalyzes a mechanistically unusual reaction, the ATP-dependent insertion of CO2 between the N7 and N8 nitrogen atoms of 7,8-diaminopelargonic acid (DAPA, also called 7,8-diammoniononanoate) to form a ureido ring. The sequence is that of ATP-dependent dethiobiotin synthetase BioD from Pseudomonas aeruginosa (strain ATCC 15692 / DSM 22644 / CIP 104116 / JCM 14847 / LMG 12228 / 1C / PRS 101 / PAO1).